A 477-amino-acid polypeptide reads, in one-letter code: MIRRLQDNGDLIRAFPRVHFVGIGGAGMTGIAEVMLTLGYEVSGSDNADNAATRRLATLGARVMRGHSAANVLGTDCVVVSSAIREDNPELMEARSQRIPIMPRAAMLAELMRFRHGIAVAGTHGKTTTTSLIAAVLSEGGLDPTFVIGGQLLAAGANAKLGAGQWLVVEADESDGSFLRLNPLVAVVTNIDADHLENYGNDFSRIKDAFTEFLQRLPFYGLALLCLDDPEVAELVGKARRHVMTYGIDAAADVRAEDVVQDGARMCFTLCLPEGKVIPVTLALPGRHNVLNALAASAVGWQLGVPPEVIGRALKSFVGIGRRFNDLGDVAIGNGACVRLIDDYGHHPRELEAVFAAARGGWPDKRLVVAFQPHRYSRTRDQFDAFAAVLSSVDALVLSEVYPAGEVPIPGADAKALARAIRARGRSEPVVVGQVASLIDVLPDVLQEGDLLLMMGAGDIGSIAQRIVHDGFVFGEV.

122–128 (GTHGKTT) is a binding site for ATP.

The protein belongs to the MurCDEF family.

It localises to the cytoplasm. The catalysed reaction is UDP-N-acetyl-alpha-D-muramate + L-alanine + ATP = UDP-N-acetyl-alpha-D-muramoyl-L-alanine + ADP + phosphate + H(+). Its pathway is cell wall biogenesis; peptidoglycan biosynthesis. Functionally, cell wall formation. This chain is UDP-N-acetylmuramate--L-alanine ligase, found in Xylella fastidiosa (strain M23).